A 307-amino-acid polypeptide reads, in one-letter code: Acetyl-coenzyme A carboxylase carboxyl transferase subunit beta (307 aa).

One can recognise a CoA carboxyltransferase N-terminal domain in the interval 25-294 (LWIKDPESGE…TEENGSRRLP (270 aa)).

This sequence belongs to the AccD/PCCB family. In terms of assembly, acetyl-CoA carboxylase is a heterohexamer composed of biotin carboxyl carrier protein (AccB), biotin carboxylase (AccC) and two subunits each of ACCase subunit alpha (AccA) and ACCase subunit beta (AccD).

The protein resides in the cytoplasm. It carries out the reaction N(6)-carboxybiotinyl-L-lysyl-[protein] + acetyl-CoA = N(6)-biotinyl-L-lysyl-[protein] + malonyl-CoA. It participates in lipid metabolism; malonyl-CoA biosynthesis; malonyl-CoA from acetyl-CoA: step 1/1. In terms of biological role, component of the acetyl coenzyme A carboxylase (ACC) complex. Biotin carboxylase (BC) catalyzes the carboxylation of biotin on its carrier protein (BCCP) and then the CO(2) group is transferred by the transcarboxylase to acetyl-CoA to form malonyl-CoA. This Chelativorans sp. (strain BNC1) protein is Acetyl-coenzyme A carboxylase carboxyl transferase subunit beta.